The chain runs to 341 residues: MSKPSVGINGFGRIGRLVLRAAVEKDSVNVVAVNDPFISIDYMVYLFQYDSTHGRFKGTVAHEGDYLLVAKEGKSQHKIKVYNSRDPAEIQWGSAGADYVVESTGVFTTIEKANAHLKGGAKKVIISAPSADAPMFVVGVNHEKYDHANDHIISNASCTTNCLAPLAKVINDNFGIIEGLMTTVHAVTATQKTVDGPSGKLWRDGRGAGQNIIPASTGAAKAVGKVIPELNGKLTGMAFRVPTPDVSVVDLTARLEKPASLDDIKKVVKAAAEGPLKGVLAYTEDQVVSTDFVSDTHSSIFDAGASIILNPNFVKLISWYDNEFGYSNRVVDLISYIATKA.

NAD(+) contacts are provided by residues 13–14 (RI), Asp-35, and Arg-85. D-glyceraldehyde 3-phosphate is bound by residues 157-159 (SCT), Thr-188, 217-218 (TG), and Arg-240. Cys-158 serves as the catalytic Nucleophile. Asn-322 contacts NAD(+).

It belongs to the glyceraldehyde-3-phosphate dehydrogenase family. As to quaternary structure, homotetramer.

It is found in the cytoplasm. The enzyme catalyses D-glyceraldehyde 3-phosphate + phosphate + NAD(+) = (2R)-3-phospho-glyceroyl phosphate + NADH + H(+). It functions in the pathway carbohydrate degradation; glycolysis; pyruvate from D-glyceraldehyde 3-phosphate: step 1/5. This Caenorhabditis briggsae protein is Glyceraldehyde-3-phosphate dehydrogenase 3.1.